We begin with the raw amino-acid sequence, 365 residues long: Probable flavin mononucleotide-dependent alkene reductase (365 aa).

Residues 30–32, Ala63, and Gln105 each bind FMN; that span reads PLT. The active-site Proton donor is the Tyr191. Residues Arg238, Ser303, and 324–325 contribute to the FMN site; that span reads GT.

The protein belongs to the NADH:flavin oxidoreductase/NADH oxidase family. In terms of assembly, monomer. Requires FMN as cofactor.

It localises to the cytoplasm. The protein localises to the cytosol. May function as a flavin mononucleotide (FMN)-dependent alkene reductase on substrates carrying alpha,beta-unsaturated carbonyl groups (ketones, aldehydes, carboxylic acids, esters, lactones or cyclic imides). The catalysis depends on NAD(P)H, which acts as a hydride donor for the reduction. Seems to be involved in metabolic pathways required for efficient replication of amastigotes within macrophages. Functionally, acts as a FMN-dependent nitroreductase that activates anti-leishmanial bicyclic nitroaromatic prodrugs including delamanid, DNDI-VL-2098 and (R)-PA-824, forming toxic products that kill the parasites. The sequence is that of Probable flavin mononucleotide-dependent alkene reductase from Leishmania infantum.